Consider the following 94-residue polypeptide: Integration host factor subunit beta (94 aa).

It belongs to the bacterial histone-like protein family. In terms of assembly, heterodimer of an alpha and a beta chain.

In terms of biological role, this protein is one of the two subunits of integration host factor, a specific DNA-binding protein that functions in genetic recombination as well as in transcriptional and translational control. The chain is Integration host factor subunit beta from Vibrio atlanticus (strain LGP32) (Vibrio splendidus (strain Mel32)).